A 785-amino-acid polypeptide reads, in one-letter code: Protein kintoun (785 aa).

Basic and acidic residues-rich tracts occupy residues 622–638 (EHNE…RDTS) and 662–679 (HNIE…KEPK). Disordered stretches follow at residues 622 to 698 (EHNE…DSHL) and 719 to 749 (KSSV…ASSN). The span at 681–695 (TSCTAESTSGQQPND) shows a compositional bias: polar residues. The span at 728-737 (SDLDEDDMPD) shows a compositional bias: acidic residues.

Belongs to the PIH1 family. Kintoun subfamily.

The protein localises to the cytoplasm. It is found in the dynein axonemal particle. In terms of biological role, required for cytoplasmic pre-assembly of axonemal dyneins, thereby playing a central role in motility in cilia and flagella. Involved in pre-assembly of dynein arm complexes in the cytoplasm before intraflagellar transport loads them for the ciliary compartment. This chain is Protein kintoun, found in Xenopus tropicalis (Western clawed frog).